The sequence spans 586 residues: Asparagine synthetase [glutamine-hydrolyzing] (586 aa).

Residue cysteine 2 is the For GATase activity of the active site. A Glutamine amidotransferase type-2 domain is found at 2–185 (CGILAVLGVV…PGHLYSSKTG (184 aa)). Residues 50 to 54 (RLAII), 75 to 77 (NGE), and aspartate 98 each bind L-glutamine. One can recognise an Asparagine synthetase domain in the interval 193–516 (PPWFSETVPS…PQDSARETVP (324 aa)). ATP-binding positions include leucine 231, isoleucine 267, and 341–342 (SG).

The catalysed reaction is L-aspartate + L-glutamine + ATP + H2O = L-asparagine + L-glutamate + AMP + diphosphate + H(+). The protein operates within amino-acid biosynthesis; L-asparagine biosynthesis; L-asparagine from L-aspartate (L-Gln route): step 1/1. Its function is as follows. Essential for nitrogen assimilation, distribution and remobilization within the plant via the phloem. This chain is Asparagine synthetase [glutamine-hydrolyzing] (ASN1), found in Zea mays (Maize).